A 452-amino-acid polypeptide reads, in one-letter code: Protein CSN12 homolog (452 aa).

Residues 249 to 446 (VTFKYYEGVL…GFVVLSKSGA (198 aa)) form the PCI domain.

This sequence belongs to the CSN12 family.

The chain is Protein CSN12 homolog (csn-8) from Neurospora crassa (strain ATCC 24698 / 74-OR23-1A / CBS 708.71 / DSM 1257 / FGSC 987).